The chain runs to 256 residues: 2-C-methyl-D-erythritol 4-phosphate cytidylyltransferase (256 aa).

Belongs to the IspD/TarI cytidylyltransferase family. IspD subfamily.

The catalysed reaction is 2-C-methyl-D-erythritol 4-phosphate + CTP + H(+) = 4-CDP-2-C-methyl-D-erythritol + diphosphate. Its pathway is isoprenoid biosynthesis; isopentenyl diphosphate biosynthesis via DXP pathway; isopentenyl diphosphate from 1-deoxy-D-xylulose 5-phosphate: step 2/6. In terms of biological role, catalyzes the formation of 4-diphosphocytidyl-2-C-methyl-D-erythritol from CTP and 2-C-methyl-D-erythritol 4-phosphate (MEP). The sequence is that of 2-C-methyl-D-erythritol 4-phosphate cytidylyltransferase from Corynebacterium glutamicum (strain R).